Consider the following 317-residue polypeptide: Porphobilinogen deaminase (317 aa).

Cysteine 245 carries the S-(dipyrrolylmethanemethyl)cysteine modification.

It belongs to the HMBS family. Monomer. Dipyrromethane serves as cofactor.

The enzyme catalyses 4 porphobilinogen + H2O = hydroxymethylbilane + 4 NH4(+). Its pathway is porphyrin-containing compound metabolism; protoporphyrin-IX biosynthesis; coproporphyrinogen-III from 5-aminolevulinate: step 2/4. The protein operates within porphyrin-containing compound metabolism; chlorophyll biosynthesis. Tetrapolymerization of the monopyrrole PBG into the hydroxymethylbilane pre-uroporphyrinogen in several discrete steps. The polypeptide is Porphobilinogen deaminase (Synechococcus sp. (strain CC9605)).